Reading from the N-terminus, the 196-residue chain is Putative 3-methyladenine DNA glycosylase (196 aa).

The protein belongs to the DNA glycosylase MPG family.

In Bacillus velezensis (strain DSM 23117 / BGSC 10A6 / LMG 26770 / FZB42) (Bacillus amyloliquefaciens subsp. plantarum), this protein is Putative 3-methyladenine DNA glycosylase.